Here is a 272-residue protein sequence, read N- to C-terminus: HMP-PP phosphatase (272 aa).

The active-site Nucleophile is D8. D8, D10, and D212 together coordinate Mg(2+).

The protein belongs to the HAD-like hydrolase superfamily. Cof family. The cofactor is Mg(2+).

The enzyme catalyses 4-amino-2-methyl-5-(diphosphooxymethyl)pyrimidine + H2O = 4-amino-2-methyl-5-(phosphooxymethyl)pyrimidine + phosphate + H(+). In terms of biological role, catalyzes the hydrolysis of 4-amino-2-methyl-5-hydroxymethylpyrimidine pyrophosphate (HMP-PP) to 4-amino-2-methyl-5-hydroxymethylpyrimidine phosphate (HMP-P). This Escherichia coli O81 (strain ED1a) protein is HMP-PP phosphatase.